Consider the following 106-residue polypeptide: 1-deoxy-D-xylulose 5-phosphate reductoisomerase (106 aa).

Aspartate 3 provides a ligand contact to Mn(2+). Serine 4, glutamate 5, serine 29, histidine 52, serine 65, asparagine 70, lysine 71, and glutamate 74 together coordinate 1-deoxy-D-xylulose 5-phosphate. Glutamate 5 contacts Mn(2+). Glutamate 74 lines the Mn(2+) pocket.

It belongs to the DXR family. It depends on Mn(2+) as a cofactor. Mg(2+) is required as a cofactor.

The protein resides in the plastid. Its subcellular location is the chloroplast stroma. The enzyme catalyses 2-C-methyl-D-erythritol 4-phosphate + NADP(+) = 1-deoxy-D-xylulose 5-phosphate + NADPH + H(+). The protein operates within isoprenoid biosynthesis; isopentenyl diphosphate biosynthesis via DXP pathway; isopentenyl diphosphate from 1-deoxy-D-xylulose 5-phosphate: step 1/6. Its function is as follows. Enzyme of the plastid non-mevalonate pathway for isoprenoid biosynthesis that catalyzes the NADPH-dependent rearrangement and reduction of 1-deoxy-D-xylulose-5-phosphate (DXP) to 2-C-methyl-D-erythritol 4-phosphate (MEP). Required for chloroplast development. The sequence is that of 1-deoxy-D-xylulose 5-phosphate reductoisomerase from Origanum vulgare (Wild marjoram).